The primary structure comprises 585 residues: MASPGSGFWSFGSEDGSGDPENPGTARAWCQVAQKFTGGIGNKLCALLYGDSEKPAESGGSVTSRAATRKVACTCDQKPCSCPKGDVNYALLHATDLLPACEGERPTLAFLQDVMNILLQYVVKSFDRSTKVIDFHYPNELLQEYNWELADQPQNLEEILTHCQTTLKYAIKTGHPRYFNQLSTGLDMVGLAADWLTSTANTNMFTYEIAPVFVLLEYVTLKKMREIIGWPGGSGDGIFSPGGAISNMYAMLIARYKMFPEVKEKGMAAVPRLIAFTSEHSHFSLKKGAAALGIGTDSVILIKCDERGKMIPSDLERRILEVKQKGFVPFLVSATAGTTVYGAFDPLLAVADICKKYKIWMHVDAAWGGGLLMSRKHKWKLNGVERANSVTWNPHKMMGVPLQCSALLVREEGLMQSCNQMHASYLFQQDKHYDLSYDTGDKALQCGRHVDVFKLWLMWRAKGTTGFEAHIDKCLELAEYLYNIIKNREGYEMVFDGKPQHTNVCFWFVPPSLRVLEDNEERMSRLSKVAPVIKARMMEYGTTMVSYQPLGDKVNFFRMVISNPAATHQDIDFLIEEIERLGQDL.

The segment at 1 to 25 is disordered; it reads MASPGSGFWSFGSEDGSGDPENPGT. A phosphoserine mark is found at S3, S6, S10, S13, and S17. Residues C30 and C45 are each lipidated (S-palmitoyl cysteine). A substrate-binding site is contributed by 181–183; that stretch reads QLS. Residue K396 is modified to N6-(pyridoxal phosphate)lysine. R558 provides a ligand contact to substrate.

The protein belongs to the group II decarboxylase family. As to quaternary structure, homodimer. Pyridoxal 5'-phosphate is required as a cofactor. Post-translationally, the N-terminus is blocked. In terms of processing, phosphorylated; which does not affect kinetic parameters or subcellular location. Palmitoylated; which is required for presynaptic clustering.

It localises to the cytoplasm. The protein resides in the cytosol. It is found in the cytoplasmic vesicle. Its subcellular location is the presynaptic cell membrane. The protein localises to the golgi apparatus membrane. The enzyme catalyses L-glutamate + H(+) = 4-aminobutanoate + CO2. Catalyzes the production of GABA. The chain is Glutamate decarboxylase 2 (Gad2) from Rattus norvegicus (Rat).